Consider the following 276-residue polypeptide: Dermonecrotic toxin LsaSicTox-alphaIB2i (276 aa).

H5 is a catalytic residue. Residues E25 and D27 each coordinate Mg(2+). Residue H41 is the Nucleophile of the active site. 2 cysteine pairs are disulfide-bonded: C45-C51 and C47-C190. D85 is a Mg(2+) binding site. N129 and N253 each carry an N-linked (GlcNAc...) asparagine glycan.

It belongs to the arthropod phospholipase D family. Class II subfamily. It depends on Mg(2+) as a cofactor. In terms of tissue distribution, expressed by the venom gland.

The protein localises to the secreted. It catalyses the reaction an N-(acyl)-sphingosylphosphocholine = an N-(acyl)-sphingosyl-1,3-cyclic phosphate + choline. It carries out the reaction an N-(acyl)-sphingosylphosphoethanolamine = an N-(acyl)-sphingosyl-1,3-cyclic phosphate + ethanolamine. The enzyme catalyses a 1-acyl-sn-glycero-3-phosphocholine = a 1-acyl-sn-glycero-2,3-cyclic phosphate + choline. The catalysed reaction is a 1-acyl-sn-glycero-3-phosphoethanolamine = a 1-acyl-sn-glycero-2,3-cyclic phosphate + ethanolamine. Its function is as follows. Dermonecrotic toxins cleave the phosphodiester linkage between the phosphate and headgroup of certain phospholipids (sphingolipid and lysolipid substrates), forming an alcohol (often choline) and a cyclic phosphate. This toxin acts on sphingomyelin (SM). It may also act on ceramide phosphoethanolamine (CPE), lysophosphatidylcholine (LPC) and lysophosphatidylethanolamine (LPE), but not on lysophosphatidylserine (LPS), and lysophosphatidylglycerol (LPG). It acts by transphosphatidylation, releasing exclusively cyclic phosphate products as second products. Induces dermonecrosis, hemolysis, increased vascular permeability, edema, inflammatory response, and platelet aggregation. The sequence is that of Dermonecrotic toxin LsaSicTox-alphaIB2i from Loxosceles sabina (Tucson recluse spider).